Reading from the N-terminus, the 423-residue chain is Phosphoribosylamine--glycine ligase (423 aa).

The 208-residue stretch at 107–314 (KAFMAKYNIP…LSDLVEAAID (208 aa)) folds into the ATP-grasp domain. 133-194 (VNQKGAPIVI…EDFLQGEEAS (62 aa)) lines the ATP pocket. E284 and N286 together coordinate Mg(2+).

The protein belongs to the GARS family. The cofactor is Mg(2+). Requires Mn(2+) as cofactor.

It carries out the reaction 5-phospho-beta-D-ribosylamine + glycine + ATP = N(1)-(5-phospho-beta-D-ribosyl)glycinamide + ADP + phosphate + H(+). It functions in the pathway purine metabolism; IMP biosynthesis via de novo pathway; N(1)-(5-phospho-D-ribosyl)glycinamide from 5-phospho-alpha-D-ribose 1-diphosphate: step 2/2. The chain is Phosphoribosylamine--glycine ligase from Neisseria meningitidis serogroup B (strain ATCC BAA-335 / MC58).